A 479-amino-acid polypeptide reads, in one-letter code: MAEDKKLVEAITSMKEDFAQWYTDVCKKAELMSYSSVKGCMIFKPAGYAIWENIKNEMDRRFKETGVENVYLPMFIPESLLEVEKDHVEGFAPEVAWVTYGGLNPLQERMCVRPTSETLFCDFYKDEIQSYRDLPKVYNQWCSVVRWEKETRPFLRSREFLWQEGHTAHATAEEAEARTQQMLNLYADFCEEVLAIPVIKGRKTDKEKFAGAEATYTIEALMHDGKALQSGTSHNFGDGFAKAFGIQYTDKDNKLKYVHQTSWGTTTRLIGAVIMTHGDDSGLVLPPKVAPVQVDVIPIMQKKAGVLDKAYEVGQALKAAGLRVKVDDSDKNPGWKFSEQEMRGIPVRVEMGPRDIEANQAVIVRRDTREKITVSIDELADRIPEILDTIQKDMLERARAHREAHTYTALNYDEFKDTAANKAGFIKAMWCGDQACEDKIKEDTTCTSRCMPFAQEKLSDVCVCCGKPAKAMVYWGKAY.

This sequence belongs to the class-II aminoacyl-tRNA synthetase family. ProS type 3 subfamily. Homodimer.

It localises to the cytoplasm. It carries out the reaction tRNA(Pro) + L-proline + ATP = L-prolyl-tRNA(Pro) + AMP + diphosphate. Functionally, catalyzes the attachment of proline to tRNA(Pro) in a two-step reaction: proline is first activated by ATP to form Pro-AMP and then transferred to the acceptor end of tRNA(Pro). In Lachnospira eligens (strain ATCC 27750 / DSM 3376 / VPI C15-48 / C15-B4) (Eubacterium eligens), this protein is Proline--tRNA ligase.